An 802-amino-acid polypeptide reads, in one-letter code: Leucine--tRNA ligase (802 aa).

Residues 40–51 carry the 'HIGH' region motif; the sequence is PYPSGAGLHVGH. A 'KMSKS' region motif is present at residues 576–580; the sequence is KMSKS. Lysine 579 provides a ligand contact to ATP.

Belongs to the class-I aminoacyl-tRNA synthetase family.

The protein localises to the cytoplasm. It carries out the reaction tRNA(Leu) + L-leucine + ATP = L-leucyl-tRNA(Leu) + AMP + diphosphate. This Bacillus cereus (strain ATCC 10987 / NRS 248) protein is Leucine--tRNA ligase.